The chain runs to 416 residues: Cyclin-dependent kinase 8 (416 aa).

An interaction with CCNC region spans residues 1 to 15 (MDYDFKVKLTGERER). In terms of domain architecture, Protein kinase spans 21-287 (EYEGCKVGRG…SEQAMQDPYF (267 aa)). ATP is bound by residues 27 to 35 (VGRGTYGHV) and K52. Residue D151 is the Proton acceptor of the active site. Residues 313–416 (EEEPDDKGDK…PQYSHQTHRY (104 aa)) are disordered. Residues 325–343 (QQQQQGNNHTNGTGHPGNQ) show a composition bias toward low complexity. Polar residues-rich tracts occupy residues 361–378 (PTTTSGGLIMTSDYQRSN) and 386–416 (PGPSTSQPQSSMGYTSTSQQPPQYSHQTHRY).

Belongs to the protein kinase superfamily. CMGC Ser/Thr protein kinase family. CDC2/CDKX subfamily. Component of the Mediator complex. Interacts with ccnc. It depends on Mg(2+) as a cofactor.

The protein localises to the nucleus. It catalyses the reaction L-seryl-[protein] + ATP = O-phospho-L-seryl-[protein] + ADP + H(+). It carries out the reaction L-threonyl-[protein] + ATP = O-phospho-L-threonyl-[protein] + ADP + H(+). The catalysed reaction is [DNA-directed RNA polymerase] + ATP = phospho-[DNA-directed RNA polymerase] + ADP + H(+). Component of the Mediator complex, a coactivator involved in regulated gene transcription of nearly all RNA polymerase II-dependent genes. Mediator functions as a bridge to convey information from gene-specific regulatory proteins to the basal RNA polymerase II transcription machinery. Mediator is recruited to promoters by direct interactions with regulatory proteins and serves as a scaffold for the assembly of a functional pre-initiation complex with RNA polymerase II and the general transcription factors. Phosphorylates the CTD (C-terminal domain) of the large subunit of RNA polymerase II (RNAp II), which may inhibit the formation of a transcription initiation complex. The polypeptide is Cyclin-dependent kinase 8 (cdk8) (Xenopus laevis (African clawed frog)).